The following is a 565-amino-acid chain: Oxygen-dependent choline dehydrogenase (565 aa).

6-35 (DYIIVGAGSAGNTLATRLTEDAGVTVLLLE) contributes to the FAD binding site. The active-site Proton acceptor is H475.

Belongs to the GMC oxidoreductase family. It depends on FAD as a cofactor.

It carries out the reaction choline + A = betaine aldehyde + AH2. The catalysed reaction is betaine aldehyde + NAD(+) + H2O = glycine betaine + NADH + 2 H(+). The protein operates within amine and polyamine biosynthesis; betaine biosynthesis via choline pathway; betaine aldehyde from choline (cytochrome c reductase route): step 1/1. Involved in the biosynthesis of the osmoprotectant glycine betaine. Catalyzes the oxidation of choline to betaine aldehyde and betaine aldehyde to glycine betaine at the same rate. The chain is Oxygen-dependent choline dehydrogenase from Pseudomonas putida (strain ATCC 700007 / DSM 6899 / JCM 31910 / BCRC 17059 / LMG 24140 / F1).